Reading from the N-terminus, the 145-residue chain is Major pollen allergen Ole e 1 (145 aa).

3 cysteine pairs are disulfide-bonded: Cys-19/Cys-90, Cys-22/Cys-131, and Cys-43/Cys-78. Asn-111 carries an N-linked (GlcNAc...) (complex) asparagine; alternate glycan. Residue Asn-111 is glycosylated (N-linked (GlcNAc...) (high mannose) asparagine; alternate).

This sequence belongs to the Ole e I family. Post-translationally, N-glycosylated; contains high mannose (Man(7)-GlcNAc) and partially fucosylated complex glycans (GlcNAc-Man(3)-Xyl-GlcNAc). Complex glycans may contribute to the antigenicity. Exists both in a glycosylated and in a non-glycosylated form. Ole e 1 and Ole e 1.0103 are the only non-glycosylated isoallergens. A second potential glycosylation site exists at position 50 in cv. Bella de Espana and cv. Hojiblanca. In terms of tissue distribution, expressed in tapetum and pollen grains. Not detected in petals, roots or leaves.

It localises to the endoplasmic reticulum. Its subcellular location is the secreted. Its function is as follows. May be involved in recognition between pollen-stigma and pollen tube-style cells. This chain is Major pollen allergen Ole e 1, found in Olea europaea (Common olive).